A 351-amino-acid chain; its full sequence is Alcohol dehydrogenase 2 (351 aa).

Residues cysteine 47, histidine 70, cysteine 101, cysteine 104, cysteine 107, cysteine 115, and cysteine 157 each coordinate Zn(2+). NAD(+) is bound by residues 181-187 (GAGGGLG), aspartate 205, lysine 209, 271-273 (VGL), and arginine 343.

This sequence belongs to the zinc-containing alcohol dehydrogenase family. As to quaternary structure, homotetramer. Zn(2+) serves as cofactor.

The enzyme catalyses a primary alcohol + NAD(+) = an aldehyde + NADH + H(+). It catalyses the reaction a secondary alcohol + NAD(+) = a ketone + NADH + H(+). The polypeptide is Alcohol dehydrogenase 2 (sodh-2) (Caenorhabditis elegans).